The chain runs to 34 residues: Dermaseptin-S2 (34 aa).

The protein belongs to the frog skin active peptide (FSAP) family. Dermaseptin subfamily. Expressed by the skin glands.

It localises to the secreted. Functionally, potent antimicrobial peptide with activity against bacteria and protozoa. Also has activity against fungi. Probably acts by disturbing membrane functions with its amphipathic structure. In Phyllomedusa sauvagei (Sauvage's leaf frog), this protein is Dermaseptin-S2.